Here is a 137-residue protein sequence, read N- to C-terminus: Putative mucosal pentraxin homolog (137 aa).

The region spanning 1–137 (MGMYLLHIGN…YVVTKPKVWA (137 aa)) is the Pentraxin (PTX) domain. 3 residues coordinate Ca(2+): Glu-73, Asp-75, and Gln-85.

Belongs to the pentraxin family. In terms of tissue distribution, not expressed in the intestinal tract including ascending colon, descending colon and rectum. Not expressed in the human colon cancer cell lines HT-29 and CaCo-2.

In Homo sapiens (Human), this protein is Putative mucosal pentraxin homolog (MPTX1).